The following is a 200-amino-acid chain: MLKYPDYLSKLISLLRKLPGIGFKTAEKLAFELLDWDKDQLESMGKAFSELSAARSHCPTCFCLKSHPESVCSFCQNNRDTSILCIVATPKDIFSLERSQIFQGHYYVLGALLSPITGRHIDAERMHLLKQRIEFLKPKEIILALDATLEGDATALFLKQELSHSSASVSRLALGLPIGLSFDYIDSGTLARAFSGRNPY.

The C4-type zinc finger occupies Cys58–Cys75. Residues Ser82–Pro177 form the Toprim domain.

The protein belongs to the RecR family.

Its function is as follows. May play a role in DNA repair. It seems to be involved in an RecBC-independent recombinational process of DNA repair. It may act with RecF and RecO. In Chlamydia abortus (strain DSM 27085 / S26/3) (Chlamydophila abortus), this protein is Recombination protein RecR.